An 803-amino-acid polypeptide reads, in one-letter code: Cation channel sperm-associated auxiliary subunit delta (803 aa).

An N-terminal signal peptide occupies residues 1-15 (MLMLMLAAVATVVRA). Topologically, residues 16 to 720 (QTVCRFRTVR…ALPVAEFRPM (705 aa)) are extracellular. Intrachain disulfides connect C19–C365, C55–C142, C141–C148, C383–C492, C506–C698, C521–C568, and C620–C648. N-linked (GlcNAc...) asparagine glycosylation is found at N226, N418, N436, N468, N534, N545, and N626. A helical transmembrane segment spans residues 721–742 (TSILLMVTVTLFTMWLAYAIPK). Residues 743-803 (QLRTERGRRL…QIGKKPDIKK (61 aa)) are Cytoplasmic-facing. The interval 782–803 (SRRVKDQPEKIPQIGKKPDIKK) is disordered.

The protein belongs to the CATSPERD family. Component of the CatSper complex or CatSpermasome composed of the core pore-forming members CATSPER1, CATSPER2, CATSPER3 and CATSPER4 as well as auxiliary members CATSPERB, CATSPERG, CATSPERD, CATSPERE, CATSPERZ, C2CD6/CATSPERT, SLCO6C1, TMEM249, TMEM262 and EFCAB9. HSPA1 may be an additional auxiliary complex member. The core complex members CATSPER1, CATSPER2, CATSPER3 and CATSPER4 form a heterotetrameric channel. The auxiliary CATSPERB, CATSPERG, CATSPERD and CATSPERE subunits form a pavilion-like structure over the pore which stabilizes the complex through interactions with CATSPER4, CATSPER3, CATSPER1 and CATSPER2 respectively. SLCO6C1 interacts with CATSPERE and TMEM262/CATSPERH interacts with CATSPERB, further stabilizing the complex. C2CD6/CATSPERT interacts at least with CATSPERD and is required for targeting the CatSper complex in the flagellar membrane.

The protein localises to the cell projection. It localises to the cilium. It is found in the flagellum membrane. Auxiliary component of the CatSper complex, a complex involved in sperm cell hyperactivation. Sperm cell hyperactivation is needed for sperm motility which is essential late in the preparation of sperm for fertilization. Required for CATSPER1 stability before intraflagellar transport and/or incorporation of the CatSper complex channel into the flagellar membrane. The chain is Cation channel sperm-associated auxiliary subunit delta from Rattus norvegicus (Rat).